The primary structure comprises 359 residues: Phospho-N-acetylmuramoyl-pentapeptide-transferase (359 aa).

10 consecutive transmembrane segments (helical) span residues 26–46 (TIYAAITALIICFLLGPWLIR), 75–95 (GGVLIIFAVVVSTLLWANLTI), 97–117 (YVWLVLMVTLGYGLIGFADDY), 134–154 (LACEVCIALLVSVVLYAKPGF), 166–186 (VLPDLGWGYIFLSTFIIVGAA), 197–217 (GLAIGPAITCFMTYLLFAYFA), 233–253 (GVGELSIFCGAIVGAGIGFLW), 261–281 (VFMGDTGSLSLGGALGCLAIV), 286–306 (ILLAIVGGIFVLETFSVIFQV), and 336–356 (KVIVRFWIISILLALLAISTL).

Belongs to the glycosyltransferase 4 family. MraY subfamily. It depends on Mg(2+) as a cofactor.

The protein localises to the cell inner membrane. The catalysed reaction is UDP-N-acetyl-alpha-D-muramoyl-L-alanyl-gamma-D-glutamyl-meso-2,6-diaminopimeloyl-D-alanyl-D-alanine + di-trans,octa-cis-undecaprenyl phosphate = di-trans,octa-cis-undecaprenyl diphospho-N-acetyl-alpha-D-muramoyl-L-alanyl-D-glutamyl-meso-2,6-diaminopimeloyl-D-alanyl-D-alanine + UMP. It functions in the pathway cell wall biogenesis; peptidoglycan biosynthesis. Its function is as follows. Catalyzes the initial step of the lipid cycle reactions in the biosynthesis of the cell wall peptidoglycan: transfers peptidoglycan precursor phospho-MurNAc-pentapeptide from UDP-MurNAc-pentapeptide onto the lipid carrier undecaprenyl phosphate, yielding undecaprenyl-pyrophosphoryl-MurNAc-pentapeptide, known as lipid I. This Syntrophus aciditrophicus (strain SB) protein is Phospho-N-acetylmuramoyl-pentapeptide-transferase.